We begin with the raw amino-acid sequence, 429 residues long: Glucose-6-phosphate exchanger SLC37A4 (429 aa).

The next 10 membrane-spanning stretches (helical) occupy residues 84–104 (LLLV…PVFA), 105–125 (ALWF…GKVL), 139–159 (AILS…ATIL), 167–187 (STLA…LLLI), 219–239 (ELLL…VFGV), 260–280 (LVGS…SIAA), 302–322 (GLLL…RVTV), 329–349 (LWIL…IALF), 368–388 (IVGL…STIA), and 394–414 (STAF…FFLL).

This sequence belongs to the major facilitator superfamily. Organophosphate:Pi antiporter (OPA) (TC 2.A.1.4) family. In terms of tissue distribution, mostly expressed in liver and kidney.

It is found in the endoplasmic reticulum membrane. It catalyses the reaction D-glucose 6-phosphate(in) + phosphate(out) = D-glucose 6-phosphate(out) + phosphate(in). Its activity is regulated as follows. Inhibited by vanadate and chlorogenic acid. Its function is as follows. Inorganic phosphate and glucose-6-phosphate antiporter of the endoplasmic reticulum. Transports cytoplasmic glucose-6-phosphate into the lumen of the endoplasmic reticulum and translocates inorganic phosphate into the opposite direction. Forms with glucose-6-phosphatase the complex responsible for glucose production through glycogenolysis and gluconeogenesis. Hence, it plays a central role in homeostatic regulation of blood glucose levels. In Homo sapiens (Human), this protein is Glucose-6-phosphate exchanger SLC37A4.